The following is a 456-amino-acid chain: MEKLWGGRFQGKSEAWIDDFGASISFDQKMAKEDLAGSLAHVAMLAKCGIISDSEASEITAGLKILQEKLALGELEFSTVNEDIHLNIEKLLHEEIGPVAGKLHTARSRNDQVATDMHLYLKEAVAEIIQSLKHLRAVLVQKAEANVETIMPGYTHLQHAQPISFAHHLLAYFGMFTRDLERLEESVKRIDISPLGSAALAGTTFPIDRAYSAELLGFSAVYENSLDGVSDRDFIIEFLSNSSILMMHLSRFCEELILWTSHEFQFVELTDAFSTGSSIMPQKKNPDMAELIRGKTGRVYGNLFGMLTVLKGLPLAYNKDLQEDKEGMFDTLETVHTSLDIFAGMIETMKVNADIMEESTQKDFSNATELADYLAKKGVPFREAHEIVGKLVLECTQNGIYLQDVAFSHYQEIHPLIEEDIYTVLASKTAVQKRNSYGGTGFDQIHVALANAKKTL.

Belongs to the lyase 1 family. Argininosuccinate lyase subfamily.

The protein localises to the cytoplasm. It catalyses the reaction 2-(N(omega)-L-arginino)succinate = fumarate + L-arginine. It functions in the pathway amino-acid biosynthesis; L-arginine biosynthesis; L-arginine from L-ornithine and carbamoyl phosphate: step 3/3. This chain is Argininosuccinate lyase, found in Listeria innocua serovar 6a (strain ATCC BAA-680 / CLIP 11262).